A 373-amino-acid chain; its full sequence is Cyclin-A3-1 (373 aa).

Residues 50–80 form a disordered region; the sequence is AVVLKPQPAPRGGKRAASHAAEPKKPAPPPA.

This sequence belongs to the cyclin family. Cyclin AB subfamily.

The polypeptide is Cyclin-A3-1 (CYCA3-1) (Oryza sativa subsp. japonica (Rice)).